A 334-amino-acid chain; its full sequence is Biotin synthase (334 aa).

The Radical SAM core domain occupies 55 to 285; the sequence is GSSGSIHACS…VHPRKIIKIA (231 aa). Positions 73, 77, and 80 each coordinate [4Fe-4S] cluster. Residues Cys-152, Cys-213, and Lys-283 each contribute to the [2Fe-2S] cluster site.

The protein belongs to the radical SAM superfamily. Biotin synthase family. As to quaternary structure, homodimer. [4Fe-4S] cluster serves as cofactor. It depends on [2Fe-2S] cluster as a cofactor.

It catalyses the reaction (4R,5S)-dethiobiotin + (sulfur carrier)-SH + 2 reduced [2Fe-2S]-[ferredoxin] + 2 S-adenosyl-L-methionine = (sulfur carrier)-H + biotin + 2 5'-deoxyadenosine + 2 L-methionine + 2 oxidized [2Fe-2S]-[ferredoxin]. Its pathway is cofactor biosynthesis; biotin biosynthesis; biotin from 7,8-diaminononanoate: step 2/2. Catalyzes the conversion of dethiobiotin (DTB) to biotin by the insertion of a sulfur atom into dethiobiotin via a radical-based mechanism. This Chlorobium phaeobacteroides (strain DSM 266 / SMG 266 / 2430) protein is Biotin synthase.